Consider the following 366-residue polypeptide: Isocitrate dehydrogenase [NAD] subunit alpha, mitochondrial (366 aa).

A mitochondrion-targeting transit peptide spans Met-1–Phe-27. An N6-succinyllysine modification is found at Lys-77. Residue Thr-101 is modified to Phosphothreonine. Residues Arg-115, Arg-125, and Arg-146 each coordinate substrate. An N6-acetyllysine modification is found at Lys-223. Mg(2+)-binding residues include Asp-233, Asp-257, and Asp-261. Lys-343 carries the N6-acetyllysine; alternate modification. Lys-343 bears the N6-succinyllysine; alternate mark. The residue at position 350 (Lys-350) is an N6-succinyllysine.

The protein belongs to the isocitrate and isopropylmalate dehydrogenases family. In terms of assembly, heterooligomer of subunits alpha (IDH3A), beta (IDH3B), and gamma (IDH3G) in the apparent ratio of 2:1:1. The heterodimer containing one IDH3A and one IDH3B subunit and the heterodimer containing one IDH3A and one IDH3G subunit assemble into a heterotetramer (which contains two subunits of IDH3A, one of IDH3B and one of IDH3G) and further into the heterooctamer. It depends on Mg(2+) as a cofactor. Mn(2+) serves as cofactor.

Its subcellular location is the mitochondrion. It carries out the reaction D-threo-isocitrate + NAD(+) = 2-oxoglutarate + CO2 + NADH. With respect to regulation, the heterotetramer and the heterodimer composed of IDH3A and IDH3G subunits can be allosterically activated by citrate (CIT) or/and ADP, and the two activators can act independently or synergistically. The heterodimer composed of IDH3A and IDH3B subunits cannot be allosterically regulated and the allosteric regulation of the heterotetramer is through the IDH3G subunit and not the IDH3B subunit. The IDH3G subunit contains the allosteric site which consists of a CIT-binding site and an ADP-binding site, and the binding of CIT and ADP causes conformational changes at the allosteric site which are transmitted to the active site in the catalytic subunit (IDH3A) through a cascade of conformational changes at the heterodimer interface, leading to stabilization of the isocitrate-binding at the active site and thus activation of the enzyme. ATP can activate the heterotetramer and the heterodimer composed of IDH3A and IDH3G subunits at low concentrations but inhibits their activities at high concentrations, whereas ATP exhibits only inhibitory effect on the heterodimer composed of IDH3A and IDH3B subunits. In terms of biological role, catalytic subunit of the enzyme which catalyzes the decarboxylation of isocitrate (ICT) into alpha-ketoglutarate. The heterodimer composed of the alpha (IDH3A) and beta (IDH3B) subunits and the heterodimer composed of the alpha (IDH3A) and gamma (IDH3G) subunits, have considerable basal activity but the full activity of the heterotetramer (containing two subunits of IDH3A, one of IDH3B and one of IDH3G) requires the assembly and cooperative function of both heterodimers. This chain is Isocitrate dehydrogenase [NAD] subunit alpha, mitochondrial, found in Homo sapiens (Human).